The following is a 213-amino-acid chain: Holliday junction branch migration complex subunit RuvA (213 aa).

A domain I region spans residues 1–63; it reads MIGMLTGRVA…EDAFKLYGFL (63 aa). The tract at residues 64–142 is domain II; sequence DDIDRAWFVH…PTGRSFSIGL (79 aa). The interval 143-160 is flexible linker; it reads PVHSDDGTTGGAPVAPAG. Residues 161–213 form a domain III region; sequence GDSLAREDAVSALVNLGYNESQARQAVAKILRDADSEAPLGDVIRLSLKELAA.

The protein belongs to the RuvA family. Homotetramer. Forms an RuvA(8)-RuvB(12)-Holliday junction (HJ) complex. HJ DNA is sandwiched between 2 RuvA tetramers; dsDNA enters through RuvA and exits via RuvB. An RuvB hexamer assembles on each DNA strand where it exits the tetramer. Each RuvB hexamer is contacted by two RuvA subunits (via domain III) on 2 adjacent RuvB subunits; this complex drives branch migration. In the full resolvosome a probable DNA-RuvA(4)-RuvB(12)-RuvC(2) complex forms which resolves the HJ.

Its subcellular location is the cytoplasm. In terms of biological role, the RuvA-RuvB-RuvC complex processes Holliday junction (HJ) DNA during genetic recombination and DNA repair, while the RuvA-RuvB complex plays an important role in the rescue of blocked DNA replication forks via replication fork reversal (RFR). RuvA specifically binds to HJ cruciform DNA, conferring on it an open structure. The RuvB hexamer acts as an ATP-dependent pump, pulling dsDNA into and through the RuvAB complex. HJ branch migration allows RuvC to scan DNA until it finds its consensus sequence, where it cleaves and resolves the cruciform DNA. This Maricaulis maris (strain MCS10) (Caulobacter maris) protein is Holliday junction branch migration complex subunit RuvA.